A 428-amino-acid chain; its full sequence is MIVDSVSQKPTTLVQKTINIYLCGPTVYNDLHLGNTRPLIVFDVLNRVLKKAKYTVNFVQNITDIDDKIIKIAQQQEVSESVVTKQQITAYKSLLKKLNILPIKHIQITEKIDKIPDYIDQLVNQNHAYVSTQNNVYFAVNSLKQYGYLANRMVHLEETDTDKKNKLDFVLWKITTAGIKWNSKWGLGRPGWHVECAFLIDYCFKNELTIHGGGVDLKFPHHENENALHMALYNQPITKHWMHIGHLMIENQKMSKSLQNFLLAVDFLNFHDFRVLRWIFYQKHYLHPIDLNQSLIEKANNDIQRIAKTLNVARTWLVYSEQSELISPKQYDPVFSALLDNLNFANAVAAIWKLIKKINTSIKTKDFSVLREQLSFLEWSIDLLGISFKSIHTKLNVRLIKEWSILHKQKAMDKADQIRKKLIKKMLL.

Residue Cys23 participates in Zn(2+) binding. The 'HIGH' region signature appears at 25 to 35 (PTVYNDLHLGN). Zn(2+) contacts are provided by Cys196, His221, and Glu225. The 'KMSKS' region signature appears at 253 to 257 (KMSKS). Position 256 (Lys256) interacts with ATP.

It belongs to the class-I aminoacyl-tRNA synthetase family. As to quaternary structure, monomer. Zn(2+) serves as cofactor.

Its subcellular location is the cytoplasm. It carries out the reaction tRNA(Cys) + L-cysteine + ATP = L-cysteinyl-tRNA(Cys) + AMP + diphosphate. The sequence is that of Cysteine--tRNA ligase (cysS) from Mycoplasma genitalium (strain ATCC 33530 / DSM 19775 / NCTC 10195 / G37) (Mycoplasmoides genitalium).